We begin with the raw amino-acid sequence, 365 residues long: Protein dbl-1 (365 aa).

Residues 1 to 42 form the signal peptide; it reads MNDSVRTTTTISSTKSLVHSFQLSAILHLFLLISFTPMSAAA. A propeptide spanning residues 43 to 244 is cleaved from the precursor; that stretch reads DQHASHATRR…KRSAQTGNSE (202 aa). N-linked (GlcNAc...) asparagine glycosylation is found at asparagine 110, asparagine 143, and asparagine 167. The tract at residues 231-259 is disordered; that stretch reads SVRRKRSAQTGNSERKNRKKGRKHHNTEA. Positions 246 to 255 are enriched in basic residues; it reads KNRKKGRKHH. Disulfide bonds link cysteine 264-cysteine 330, cysteine 293-cysteine 362, and cysteine 297-cysteine 364. Asparagine 306 is a glycosylation site (N-linked (GlcNAc...) asparagine).

This sequence belongs to the TGF-beta family. As to quaternary structure, homodimer; disulfide-linked. Interacts with drag-1. Expressed in embryos just prior to hatching and remains constant in most cells throughout the larval and adult stages. Expressed by AVA command interneurons.

Its subcellular location is the secreted. In terms of biological role, ligand for the serine/threonine-protein kinase receptor type-1 sma-6 which activates a TGF-beta-like signaling pathway. Multifunctional protein that is involved in body size, male ectodermal patterning, innate immunity, lipid metabolism and neural plasticity. Dose-dependent regulator of body size, probably influencing the sizes of some or all cells rather than their number. Plays a role in patterning of male-specific genital sensilla (simple sense organs), known as rays, and mating-associated structures, spicules. Plays a protective role in response to infection by the Gram-negative bacterium S.marcescens, by activating expression of genes involved in innate immunity. Regulator of lipid homeostasis, acting non cell-autonomously in the hypodermis; partly dependent on the Insulin/IGF-1-like signaling (IIS) mediated pathway. Required for aversive olfactory learning of pathogenic bacteria in adults. Involved in gland cell morphology, possibly via activation of a Smad-independent TGF-beta signaling pathway. Required to oppose the autoregulation of expression of Runt-related transcription factor rnt-1. In Caenorhabditis elegans, this protein is Protein dbl-1.